The chain runs to 601 residues: Glutathione-regulated potassium-efflux system protein KefB (601 aa).

The next 13 membrane-spanning stretches (helical) occupy residues 4-24 (SDFL…VPLA), 29-49 (IGAV…GLGF), 55-75 (EILH…GLEL), 87-107 (IFGV…GLLM), 115-135 (AAVV…LQLM), 152-172 (VLLF…LLAG), 177-197 (HFDW…LIGG), 207-227 (FIAA…LVLG), 230-250 (LFMD…GVLL), 268-288 (GLLL…GVLY), 291-311 (LLWV…VLYL), 324-344 (MQFA…FSSA), and 356-376 (ALLL…MKLV). In terms of domain architecture, RCK N-terminal spans 400-519 (KPQVIVVGFG…AGVTQFSRET (120 aa)).

It belongs to the monovalent cation:proton antiporter 2 (CPA2) transporter (TC 2.A.37) family. KefB subfamily. As to quaternary structure, interacts with the regulatory subunit KefG.

It is found in the cell inner membrane. In terms of biological role, pore-forming subunit of a potassium efflux system that confers protection against electrophiles. Catalyzes K(+)/H(+) antiport. The polypeptide is Glutathione-regulated potassium-efflux system protein KefB (Escherichia coli O127:H6 (strain E2348/69 / EPEC)).